A 310-amino-acid chain; its full sequence is Porphobilinogen deaminase (310 aa).

C242 carries the S-(dipyrrolylmethanemethyl)cysteine modification.

The protein belongs to the HMBS family. Monomer. Dipyrromethane is required as a cofactor.

The catalysed reaction is 4 porphobilinogen + H2O = hydroxymethylbilane + 4 NH4(+). It functions in the pathway porphyrin-containing compound metabolism; protoporphyrin-IX biosynthesis; coproporphyrinogen-III from 5-aminolevulinate: step 2/4. Functionally, tetrapolymerization of the monopyrrole PBG into the hydroxymethylbilane pre-uroporphyrinogen in several discrete steps. This Shewanella oneidensis (strain ATCC 700550 / JCM 31522 / CIP 106686 / LMG 19005 / NCIMB 14063 / MR-1) protein is Porphobilinogen deaminase.